The following is an 87-amino-acid chain: Mitochondrial import protein 2 (87 aa).

Residues 1 to 53 (MADSEDTSVILQGIDTINSVEGLEEDGYLSDEDTSLSNELADAQRQWEESLQQ) lie on the Cytoplasmic side of the membrane. The chain crosses the membrane as a helical span at residues 54 to 71 (LNKLLNWVLLPLLGKYIG). At 72-87 (RRMAKTLWSRFIEHFV) the chain is on the mitochondrial intermembrane side.

Belongs to the MIM2 family. In terms of assembly, component of the MIM complex containing at least MIM1 and MIM2. Interacts with MIM1; interaction is direct.

The protein localises to the mitochondrion outer membrane. In terms of biological role, component of the MIM complex required for outer membrane protein import. Involved in import of the subset of proteins with multiple alpha-helical transmembrane segments, including UGO1, TOM20 and FZO1. This Saccharomyces cerevisiae (strain ATCC 204508 / S288c) (Baker's yeast) protein is Mitochondrial import protein 2.